The primary structure comprises 372 residues: NAD(P)H-quinone oxidoreductase subunit 1 (372 aa).

8 helical membrane-spanning segments follow: residues 27 to 47 (MLWL…GVLV), 97 to 117 (ILFT…WLIV), 128 to 148 (VGVG…GLLM), 166 to 186 (AAQS…VVMM), 204 to 224 (VLSW…ICAL), 266 to 286 (VLSA…PIPV), 308 to 328 (TVGI…AILL), and 347 to 367 (FLLP…LAFP).

This sequence belongs to the complex I subunit 1 family. NDH-1 is composed of at least 11 different subunits.

Its subcellular location is the cellular thylakoid membrane. The catalysed reaction is a plastoquinone + NADH + (n+1) H(+)(in) = a plastoquinol + NAD(+) + n H(+)(out). It catalyses the reaction a plastoquinone + NADPH + (n+1) H(+)(in) = a plastoquinol + NADP(+) + n H(+)(out). In terms of biological role, NDH-1 shuttles electrons from an unknown electron donor, via FMN and iron-sulfur (Fe-S) centers, to quinones in the respiratory and/or the photosynthetic chain. The immediate electron acceptor for the enzyme in this species is believed to be plastoquinone. Couples the redox reaction to proton translocation, and thus conserves the redox energy in a proton gradient. The sequence is that of NAD(P)H-quinone oxidoreductase subunit 1 from Synechococcus sp. (strain CC9311).